The primary structure comprises 185 residues: Ribosome-recycling factor (185 aa).

This sequence belongs to the RRF family.

The protein resides in the cytoplasm. Responsible for the release of ribosomes from messenger RNA at the termination of protein biosynthesis. May increase the efficiency of translation by recycling ribosomes from one round of translation to another. The polypeptide is Ribosome-recycling factor (Thermotoga sp. (strain RQ2)).